Reading from the N-terminus, the 73-residue chain is Probable minor pilin MMP0528 (73 aa).

Positions 1–10 are excised as a propeptide; sequence MLKKLYSKKG. Residues 11-19 carry the QXSXEXXXL motif; the sequence is QVSMEMGIL.

The N-terminus is probably cleaved by the prepilin peptidase EppA, which recognizes the class III signal sequence.

The protein resides in the secreted. The protein localises to the cell surface. Its subcellular location is the fimbrium. This chain is Probable minor pilin MMP0528, found in Methanococcus maripaludis (strain DSM 14266 / JCM 13030 / NBRC 101832 / S2 / LL).